The primary structure comprises 328 residues: Peroxidase 63 (328 aa).

Residues 1–27 form the signal peptide; the sequence is MAEQSQLKNLTIILLLLCLSFQSLSFA. Disulfide bonds link Cys41–Cys122, Cys74–Cys79, Cys128–Cys324, and Cys207–Cys234. Residue His72 is the Proton acceptor of the active site. Ca(2+) contacts are provided by Asp73, Gly78, Asp80, and Ser82. Pro170 provides a ligand contact to substrate. His200 serves as a coordination point for heme b. Residue Thr201 coordinates Ca(2+). Residues Asn217 and Asn218 are each glycosylated (N-linked (GlcNAc...) asparagine). The Ca(2+) site is built by Asp248, Thr251, and Asp256.

Belongs to the peroxidase family. Classical plant (class III) peroxidase subfamily. The cofactor is heme b. Requires Ca(2+) as cofactor.

Its subcellular location is the secreted. It catalyses the reaction 2 a phenolic donor + H2O2 = 2 a phenolic radical donor + 2 H2O. Removal of H(2)O(2), oxidation of toxic reductants, biosynthesis and degradation of lignin, suberization, auxin catabolism, response to environmental stresses such as wounding, pathogen attack and oxidative stress. These functions might be dependent on each isozyme/isoform in each plant tissue. This Arabidopsis thaliana (Mouse-ear cress) protein is Peroxidase 63 (PER63).